The primary structure comprises 408 residues: Serine/threonine-protein kinase ATG1t (408 aa).

Residues 7-272 (YIAKSKLSES…GRIKNSRVWV (266 aa)) enclose the Protein kinase domain. ATP contacts are provided by residues 13–21 (LSESLTSTV) and Lys-36. The active-site Proton acceptor is Asp-129.

It belongs to the protein kinase superfamily. Ser/Thr protein kinase family.

It is found in the cytoplasmic vesicle. The protein localises to the autophagosome. Its function is as follows. Serine/threonine protein kinase involved in autophagy. The ATG1-ATG13 protein kinase complex regulates downstream events required for autophagosome enclosure and/or vacuolar delivery. The sequence is that of Serine/threonine-protein kinase ATG1t from Arabidopsis thaliana (Mouse-ear cress).